Here is a 3779-residue protein sequence, read N- to C-terminus: Protein DDB_G0268328 (3779 aa).

Disordered stretches follow at residues 24-56, 1001-1028, 1137-1165, 1513-1538, 1656-1690, 2027-2054, 2144-2184, 2280-2325, 2508-2527, 2720-2748, 2975-3030, and 3427-3450; these read RQIK…KDGS, HEDE…DDDD, QDST…QQQQ, PTNS…SLLS, ETTV…NNKE, SNSS…DSNN, NNNN…NNSS, ISTT…NEQQ, QINN…REEG, DGNN…NDSS, ESND…DSIK, and QSNT…SGKL. 4 stretches are compositionally biased toward low complexity: residues 26–56, 1011–1020, 1149–1165, and 1515–1538; these read IKSQ…KDGS, DNSNNSNSQD, YYHQ…QQQQ, and NSIY…SLLS. Basic and acidic residues predominate over residues 1656–1671; that stretch reads ETTVLEKETKETKDNN. Low complexity predominate over residues 1672 to 1687; it reads LENNNNNTNNSNNNNN. Composition is skewed to low complexity over residues 2144–2182 and 2285–2322; these read NNNN…NNNN. 2 stretches are compositionally biased toward low complexity: residues 2722–2745 and 3015–3030; these read NNNN…QNNN and SVNN…DSIK. Positions 3433–3446 are enriched in gly residues; sequence GTGGGGGNGGGNNG.

In Dictyostelium discoideum (Social amoeba), this protein is Protein DDB_G0268328.